A 307-amino-acid polypeptide reads, in one-letter code: MRIIFAGTPDFAVPSLRAAAQRHEVVAVYTQPDRPAGRGRGLTPSPVKLEAVARGIPVFQPQTLRSPEALATVRKLDADLMVVVAYGLILPKAVLAAPTHGCWNVHASLLPRWRGAAPIQRAIEAGDTETGVCLMQMEAGLDTGPVLLSQRIEIGEQETGGQLHDRLAALGAQVLSDGLGLLRAGIRPVAQPQPDDGVTYAHKLDKAQARLDWAQPAQELARRVRAFNPWPVAEAILAGERVRLHGAVALELAHQHPPGTLLAASKQGIDIACGEGALRVRVLQREGGKAITAADYLNARRDLPALR.

(6S)-5,6,7,8-tetrahydrofolate is bound at residue 108–111; the sequence is SLLP.

It belongs to the Fmt family.

The enzyme catalyses L-methionyl-tRNA(fMet) + (6R)-10-formyltetrahydrofolate = N-formyl-L-methionyl-tRNA(fMet) + (6S)-5,6,7,8-tetrahydrofolate + H(+). Its function is as follows. Attaches a formyl group to the free amino group of methionyl-tRNA(fMet). The formyl group appears to play a dual role in the initiator identity of N-formylmethionyl-tRNA by promoting its recognition by IF2 and preventing the misappropriation of this tRNA by the elongation apparatus. This Xanthomonas euvesicatoria pv. vesicatoria (strain 85-10) (Xanthomonas campestris pv. vesicatoria) protein is Methionyl-tRNA formyltransferase.